Here is a 725-residue protein sequence, read N- to C-terminus: MSEILIEEIKDQIVVKDEEIDVSELEVKLNVTKPVGYDTVVVIEGAPVVEEAKQQDFFRFLSSKVLAKIGKVKENGFYMPFEEKNGKKMSLGLVFADFENVDGADLCVQELDGKQILKNHTFVVRKLNQLEKAFSTPDEFSFEEREFKEREHLRSWLTDYYGRDQFISYYGNRVSVNWNRKSDVPEQIVDRENWTETYVQWSPMGTYLVSLHLRGIQLWGGESWGMCARFLHPYVKFVDFSPNEKYLVSWSYEPVRLPPIGHPARETMPFTDDDEGKHCFVWDIASGRILRSFKIPPQPEGSKDGKKVIWPIFKWSADDKYLARVTVGQSISVYETPSLALVDKKTIKIDGVQNFEWCPVSDALGRDSKEQLLAYWTPEITNQPARVALISIPSKSTIRTKNLFNVSDCKLYWQSNGDYLCVKVDRHTKTKKSTFSNLEIFRIREKNIPVEVVDLKDVVLNFAWEPKSDRFAIISANDQVLNSTNVKTNLSFYGFEQKKNTPSTFRHIITFDKKTCNSLFMAPKGRFMVAATLGSSTQYDLEFYDLDFDTEKKEPDALANVQQIGSAEHFGMTELEWDPSGRYVTTSSTIWRHKLENGYRLCDFRGTLLREEMIGEFKQFIWRPRPPSPLTKEDMKKIRKKLKDYNRLFDEEDIAEQSSANRELAARRRQLISEWQKYRDEVIARVAEERAITGQPAITVPAEEEEIIQETVEEVISEEIEPVED.

Phosphoserine is present on Ser-23. The RRM domain maps to 39 to 129; sequence TVVVIEGAPV…HTFVVRKLNQ (91 aa). Residue Ser-135 is modified to Phosphoserine. A Phosphothreonine modification is found at Thr-136. WD repeat units lie at residues 190–229, 304–344, and 347–386; these read DRENWTETYVQWSPMGTYLVSLHLRGIQLWGGESWGMCAR, DGKK…LVDK, and IKIDGVQNFEWCPVSDALGRDSKEQLLAYWTPEITNQPAR. A coiled-coil region spans residues 630-671; the sequence is LTKEDMKKIRKKLKDYNRLFDEEDIAEQSSANRELAARRRQL.

The protein belongs to the eIF-3 subunit B family. Component of the eukaryotic translation initiation factor 3 (eIF-3) complex. The eIF-3 complex appears to include tif32/eif3a, SPAC25G10.08/eif3b, tif33/eif3c, SPBC4C3.07/eif3f, tif35/eif3g and sum1/eif3i. This set of common subunits may also associate exclusively with either moe1/eif3d and int6/eif3e, or with SPAC821.05/eif3h and SPAC1751.03/eif3m. The eIF-3 complex may also include SPAC3A12.13c/eif3j.

The protein resides in the cytoplasm. RNA-binding component of the eukaryotic translation initiation factor 3 (eIF-3) complex, which is involved in protein synthesis of a specialized repertoire of mRNAs and, together with other initiation factors, stimulates binding of mRNA and methionyl-tRNAi to the 40S ribosome. The eIF-3 complex specifically targets and initiates translation of a subset of mRNAs involved in cell proliferation. This is Eukaryotic translation initiation factor 3 subunit B from Schizosaccharomyces pombe (strain 972 / ATCC 24843) (Fission yeast).